Reading from the N-terminus, the 414-residue chain is Thyroid hormone receptor beta-B (414 aa).

The modulating stretch occupies residues 1-59 (MPSSMSVRLFTASAAQRKKIQEGDCCVVLAGKTQGRFILIGAVARVSGYIPSYLDKDEL). NR C4-type zinc fingers lie at residues 60 to 80 (CVVCGDKATGYHYRCITCEGC) and 98 to 122 (CKYEGKCVIDKVTRNQCQECRFKKC). A DNA-binding region (nuclear receptor) is located at residues 60–134 (CVVCGDKATG…VGMATDLVLD (75 aa)). The NR LBD domain maps to 170-414 (EEWELIQVVT…PPLFLEVFED (245 aa)).

It belongs to the nuclear hormone receptor family. NR1 subfamily.

Its subcellular location is the nucleus. Its function is as follows. High affinity receptor for triiodothyronine (T3). This Xenopus laevis (African clawed frog) protein is Thyroid hormone receptor beta-B (thrb-b).